A 402-amino-acid chain; its full sequence is Advanced glycosylation end product-specific receptor (402 aa).

Residues methionine 1–glycine 22 form the signal peptide. The 87-residue stretch at glycine 23 to lysine 109 folds into the Ig-like V-type domain. Residues glycine 23–leucine 341 lie on the Extracellular side of the membrane. 2 N-linked (GlcNAc...) asparagine glycosylation sites follow: asparagine 25 and asparagine 80. 2 disulfides stabilise this stretch: cysteine 38–cysteine 98 and cysteine 143–cysteine 206. Ig-like C2-type domains follow at residues proline 123–asparagine 219 and proline 233–asparagine 315. The chain crosses the membrane as a helical span at residues alanine 342–arginine 362. Topologically, residues lysine 363–proline 402 are cytoplasmic. The interval leucine 368–proline 402 is disordered. A phosphoserine mark is found at serine 376 and serine 389. Positions serine 376–methionine 394 are enriched in acidic residues.

As to quaternary structure, constitutive homodimer; disulfide-linked. Forms homooligomers. Interacts with S100A1 and APP. Interacts with S100B, S100A12 and S100A14. Interacts with TIRAP. Interacts with HMGB1. Interacts with LGP2; this interaction plays an important role in AGER-mediated pro-inflammatory responses and cytokine release. Interacts with double-strand break repair protein MRE11 which is a core component of the MRN complex; the interaction enhances MRE11 endonuclease activity and promotes DNA repair. Interacts with the MCM2-7 complex via interaction with complex member MCM2; the interaction is increased following DNA replication stress and stabilizes the MCM2-7 complex at replication forks. In terms of processing, phosphorylated on its cytoplasmic domain by PKCzeta/PRKCZ upon ligand binding. Phosphorylated by ATM following DNA damage. Targeted by the ubiquitin E3 ligase subunit FBXO10 to mediate its ubiquitination and degradation. As to expression, endothelial cells and cardiomyocytes. Expressed in brain.

It localises to the cell membrane. The protein localises to the cell projection. Its subcellular location is the phagocytic cup. It is found in the early endosome. The protein resides in the nucleus. Functionally, cell surface pattern recognition receptor that senses endogenous stress signals with a broad ligand repertoire including advanced glycation end products, S100 proteins, high-mobility group box 1 protein/HMGB1, amyloid beta/APP oligomers, nucleic acids, histones, phospholipids and glycosaminoglycans. Advanced glycosylation end products are nonenzymatically glycosylated proteins which accumulate in vascular tissue in aging and at an accelerated rate in diabetes. These ligands accumulate at inflammatory sites during the pathogenesis of various diseases including diabetes, vascular complications, neurodegenerative disorders and cancers, and RAGE transduces their binding into pro-inflammatory responses. Upon ligand binding, uses TIRAP and MYD88 as adapters to transduce the signal ultimately leading to the induction of inflammatory cytokines IL6, IL8 and TNFalpha through activation of NF-kappa-B. Interaction with S100A12 on endothelium, mononuclear phagocytes, and lymphocytes triggers cellular activation, with generation of key pro-inflammatory mediators. Interaction with S100B after myocardial infarction may play a role in myocyte apoptosis by activating ERK1/2 and p53/TP53 signaling. Contributes to the translocation of amyloid-beta peptide (ABPP) across the cell membrane from the extracellular to the intracellular space in cortical neurons. ABPP-initiated RAGE signaling, especially stimulation of p38 mitogen-activated protein kinase (MAPK), has the capacity to drive a transport system delivering ABPP as a complex with RAGE to the intraneuronal space. Participates in endothelial albumin transcytosis together with HMGB1 through the RAGE/SRC/Caveolin-1 pathway, leading to endothelial hyperpermeability. Mediates the loading of HMGB1 in extracellular vesicles (EVs) that shuttle HMGB1 to hepatocytes by transferrin-mediated endocytosis and subsequently promote hepatocyte pyroptosis by activating the NLRP3 inflammasome. Binds to DNA and promotes extracellular hypomethylated DNA (CpG DNA) uptake by cells via the endosomal route to activate inflammatory responses. Mediates phagocytosis by non-professional phagocytes (NPP) and this is enhanced by binding to ligands including RNA, DNA, HMGB1 and histones. Promotes NPP-mediated phagocytosis of Saccharomyces cerevisiae spores by binding to RNA attached to the spore wall. Also promotes NPP-mediated phagocytosis of apoptotic cells. Following DNA damage, recruited to DNA double-strand break sites where it colocalizes with the MRN repair complex via interaction with double-strand break repair protein MRE11. Enhances the endonuclease activity of MRE11, promoting the end resection of damaged DNA. Promotes DNA damage repair in trophoblasts which enhances trophoblast invasion and contributes to placental development and maintenance. Protects cells from DNA replication stress by localizing to damaged replication forks where it stabilizes the MCM2-7 complex and promotes faithful progression of the replication fork. This Rattus norvegicus (Rat) protein is Advanced glycosylation end product-specific receptor (Ager).